Consider the following 315-residue polypeptide: DNA-directed RNA polymerase subunit alpha (315 aa).

The tract at residues 1 to 228 is alpha N-terminal domain (alpha-NTD); the sequence is MIGMEKPKIE…EHLELFISLT (228 aa). The segment at 245–315 is alpha C-terminal domain (alpha-CTD); it reads RNKLMEMTIE…FGLSLRQPDD (71 aa).

This sequence belongs to the RNA polymerase alpha chain family. In terms of assembly, homodimer. The RNAP catalytic core consists of 2 alpha, 1 beta, 1 beta' and 1 omega subunit. When a sigma factor is associated with the core the holoenzyme is formed, which can initiate transcription.

It catalyses the reaction RNA(n) + a ribonucleoside 5'-triphosphate = RNA(n+1) + diphosphate. Its function is as follows. DNA-dependent RNA polymerase catalyzes the transcription of DNA into RNA using the four ribonucleoside triphosphates as substrates. This Symbiobacterium thermophilum (strain DSM 24528 / JCM 14929 / IAM 14863 / T) protein is DNA-directed RNA polymerase subunit alpha.